We begin with the raw amino-acid sequence, 2442 residues long: Centrosome-associated protein CEP250 (2442 aa).

Coiled coils occupy residues 95 to 158, 244 to 352, 395 to 1172, and 1243 to 2227; these read NLDE…KESQ, AQLL…TQVM, LTRR…EQQP, and SALH…KERL. Basic and acidic residues-rich tracts occupy residues 1273–1289 and 1699–1715; these read LTDT…ELQD and LTTQ…EGKG. Disordered stretches follow at residues 1273–1308, 1699–1725, and 1820–1839; these read LTDT…EGKQ, LTTQ…GSLE, and EALQ…VKEK. Positions 1820 to 1831 are enriched in low complexity; that stretch reads EALQQEQQQAQG. The residue at position 2138 (Ser-2138) is a Phosphoserine. Residue Thr-2218 is modified to Phosphothreonine. Positions 2223–2244 are disordered; the sequence is EKERLHSPGATSTAELGSRGEQ. A phosphoserine mark is found at Ser-2229, Ser-2252, and Ser-2322. Positions 2262 to 2376 form a coiled coil; sequence GMEKQSWRQR…RKQKQDYITR (115 aa). 2 disordered regions span residues 2307-2345 and 2416-2442; these read RRKL…KNSD and ESLT…AASR. The segment covering 2328 to 2338 has biased composition (polar residues); that stretch reads ATASSPTQQDG. Phosphoserine; by NEK2 occurs at positions 2417 and 2421. Residues 2433 to 2442 show a composition bias toward polar residues; the sequence is SPSTTQAASR.

As to quaternary structure, monomer and homodimer. Forms a complex in vitro with both NEK2 kinase and the PPP1CC catalytic subunit of protein phosphatase 1 (PP1). Interacts with CEP135. Interacts with CROCC/rootletin. Interacts with CNTLN. Interacts with NIN (via C-terminus). Interacts with CCDC102B (via N-terminus); the interaction results in recruitment of CCDC102B to the proximal ends of centrioles. In terms of processing, differentially phosphorylated during cell cycle. Phosphorylation may regulate association/dissociation from centrosome. During M phase of mitosis, C-terminal part is phosphorylated by NEK2, suggesting that it may trigger the dissociation from the mitotic centrosome. Dephosphorylated in vitro by the PP1 phosphatase. Ubiquitously and weakly expressed.

Its subcellular location is the cytoplasm. It is found in the perinuclear region. The protein localises to the cytoskeleton. It localises to the microtubule organizing center. The protein resides in the centrosome. Its subcellular location is the centriole. It is found in the cilium basal body. The protein localises to the cell projection. It localises to the cilium. The protein resides in the photoreceptor outer segment. Its subcellular location is the photoreceptor inner segment. Its function is as follows. Plays an important role in centrosome cohesion during interphase. Recruits CCDC102B to the proximal ends of centrioles. Maintains centrosome cohesion by forming intercentriolar linkages. Accumulates at the proximal end of each centriole, forming supramolecular assemblies with viscous material properties that promote organelle cohesion. May be involved in ciliogenesis. The protein is Centrosome-associated protein CEP250 (CEP250) of Homo sapiens (Human).